The primary structure comprises 338 residues: Lipoate-protein ligase A (338 aa).

In terms of domain architecture, BPL/LPL catalytic spans 29–216 (PATQRVLFLW…AFFAHYGERV (188 aa)). Residues R71, 76–79 (GAVF), and K134 each bind ATP. Position 134 (K134) interacts with (R)-lipoate.

Belongs to the LplA family. Monomer.

It is found in the cytoplasm. It carries out the reaction L-lysyl-[lipoyl-carrier protein] + (R)-lipoate + ATP = N(6)-[(R)-lipoyl]-L-lysyl-[lipoyl-carrier protein] + AMP + diphosphate + H(+). Its pathway is protein modification; protein lipoylation via exogenous pathway; protein N(6)-(lipoyl)lysine from lipoate: step 1/2. It functions in the pathway protein modification; protein lipoylation via exogenous pathway; protein N(6)-(lipoyl)lysine from lipoate: step 2/2. Its function is as follows. Catalyzes both the ATP-dependent activation of exogenously supplied lipoate to lipoyl-AMP and the transfer of the activated lipoyl onto the lipoyl domains of lipoate-dependent enzymes. The protein is Lipoate-protein ligase A of Escherichia coli (strain K12 / MC4100 / BW2952).